The sequence spans 144 residues: MTNIFKDSRRDLRERAFQTLFALEFGGEALDQAYFAYTYDKPIDEETEVDLPSFLLSLVTGVREELPQLDSQIEEKLKEGWSLSRLIMTDRTLLRLGLYEITSFEETPGRVAINEIIEIAKKYSDKTSAKFINGVLSQFVTDEA.

It belongs to the NusB family.

In terms of biological role, involved in transcription antitermination. Required for transcription of ribosomal RNA (rRNA) genes. Binds specifically to the boxA antiterminator sequence of the ribosomal RNA (rrn) operons. The sequence is that of Transcription antitermination protein NusB from Streptococcus thermophilus (strain CNRZ 1066).